A 314-amino-acid polypeptide reads, in one-letter code: Lysophospholipase D GDPD1 (314 aa).

The Extracellular segment spans residues 1 to 3; that stretch reads MSS. A helical transmembrane segment spans residues 4-24; the sequence is TAAFCLLSTLGGYLVTSFLLL. The Cytoplasmic portion of the chain corresponds to 25–195; the sequence is KYPALLHQRK…VDKCYKENSD (171 aa). The GP-PDE domain maps to 40–309; the sequence is SRHISHRGGA…DYPTKLKDFL (270 aa). 3 residues coordinate a divalent metal cation: Glu-72, Asp-74, and His-87. A helical membrane pass occupies residues 196–216; that stretch reads IPILFSLQRVLLILGLFFTGL. The Extracellular portion of the chain corresponds to 217 to 314; it reads LPFVPIREQF…LKDFLNNFSA (98 aa).

This sequence belongs to the glycerophosphoryl diester phosphodiesterase family. In terms of tissue distribution, widely expressed.

Its subcellular location is the cytoplasm. It is found in the membrane. The protein localises to the perinuclear region. The protein resides in the endoplasmic reticulum. It catalyses the reaction 1-hexadecanoyl-sn-glycero-3-phosphocholine + H2O = 1-hexadecanoyl-sn-glycero-3-phosphate + choline + H(+). It carries out the reaction 1-hexadecanoyl-sn-glycero-3-phosphoethanolamine + H2O = 1-hexadecanoyl-sn-glycero-3-phosphate + ethanolamine + H(+). The enzyme catalyses N-hexadecanoyl-sn-glycero-3-phosphoethanolamine + H2O = N-hexadecanoylethanolamine + sn-glycerol 3-phosphate + H(+). The catalysed reaction is N-(5Z,8Z,11Z,14Z-eicosatetraenoyl)-1-(9Z-octadecenoyl)-sn-glycero-3-phosphoethanolamine + H2O = N-(5Z,8Z,11Z,14Z-eicosatetraenoyl)-ethanolamine + 1-(9Z-octadecenoyl)-sn-glycero-3-phosphate + H(+). It catalyses the reaction N,1-di-(9Z-octadecenoyl)-sn-glycero-3-phosphoethanolamine + H2O = N-(9Z-octadecenoyl) ethanolamine + 1-(9Z-octadecenoyl)-sn-glycero-3-phosphate + H(+). It carries out the reaction N-hexadecanoyl-1-(9Z-octadecenoyl)-sn-glycero-3-phosphoethanolamine + H2O = N-hexadecanoylethanolamine + 1-(9Z-octadecenoyl)-sn-glycero-3-phosphate + H(+). The enzyme catalyses a 1-O-alkyl-sn-glycero-3-phosphocholine + H2O = a 1-O-alkyl-sn-glycero-3-phosphate + choline + H(+). The catalysed reaction is 1-O-hexadecyl-sn-glycero-3-phosphocholine + H2O = 1-O-hexadecyl-sn-glycero-3-phosphate + choline + H(+). It catalyses the reaction 1-(9Z-octadecenoyl)-sn-glycero-3-phosphocholine + H2O = 1-(9Z-octadecenoyl)-sn-glycero-3-phosphate + choline + H(+). It carries out the reaction N,1-dihexadecanoyl-sn-glycero-3-phosphoethanolamine + H2O = N-hexadecanoylethanolamine + 1-hexadecanoyl-sn-glycero-3-phosphate + H(+). The enzyme catalyses 1-O-(1Z-octadecenyl)-sn-glycero-3-phospho-(N-5Z,8Z,11Z,14Z-eicosatetraenoyl)-ethanolamine + H2O = 1-O-(1Z-octadecenyl)-sn-glycero-3-phosphate + N-(5Z,8Z,11Z,14Z-eicosatetraenoyl)-ethanolamine + H(+). The catalysed reaction is 1-O-(1Z-octadecenyl)-sn-glycero-3-phospho-(N-9Z-octadecenoyl)-ethanolamine + H2O = 1-O-(1Z-octadecenyl)-sn-glycero-3-phosphate + N-(9Z-octadecenoyl) ethanolamine + H(+). It catalyses the reaction 1-O-(1Z-octadecenyl)-sn-glycero-3-phospho-N-hexadecanoyl-ethanolamine + H2O = 1-O-(1Z-octadecenyl)-sn-glycero-3-phosphate + N-hexadecanoylethanolamine + H(+). Lysophospholipase D activity is increased by magnesium and manganese and inhibited by calcium in a concentration dependent manner. Loss of lysophospholipase D activity by addition of EDTA. In terms of biological role, hydrolyzes lysoglycerophospholipids to produce lysophosphatidic acid (LPA) and the corresponding amines. Shows a preference for 1-O-alkyl-sn-glycero-3-phosphocholine (lyso-PAF), lysophosphatidylethanolamine (lyso-PE) and lysophosphatidylcholine (lyso-PC). May be involved in bioactive N-acylethanolamine biosynthesis from both N-acyl-lysoplasmenylethanolamin (N-acyl-lysoPlsEt) and N-acyl-lysophosphatidylethanolamin (N-acyl-lysoPE). In addition, hydrolyzes glycerophospho-N-acylethanolamine to N-acylethanolamine. Does not display glycerophosphodiester phosphodiesterase activity, since it cannot hydrolyze either glycerophosphoinositol or glycerophosphocholine. The chain is Lysophospholipase D GDPD1 from Mus musculus (Mouse).